The sequence spans 142 residues: Large ribosomal subunit protein uL11 (142 aa).

Belongs to the universal ribosomal protein uL11 family. Part of the ribosomal stalk of the 50S ribosomal subunit. Interacts with L10 and the large rRNA to form the base of the stalk. L10 forms an elongated spine to which L12 dimers bind in a sequential fashion forming a multimeric L10(L12)X complex. Post-translationally, one or more lysine residues are methylated.

Forms part of the ribosomal stalk which helps the ribosome interact with GTP-bound translation factors. The protein is Large ribosomal subunit protein uL11 of Mycobacterium leprae (strain Br4923).